We begin with the raw amino-acid sequence, 397 residues long: Penicillopepsin-1 (397 aa).

An N-terminal signal peptide occupies residues Met-1–Ala-20. A propeptide spans Ala-21–Ala-71 (activation peptide). The Peptidase A1 domain maps to Tyr-87–Ala-394. Residues Asp-103 and Asp-285 contribute to the active site. A glycan (N-linked (GlcNAc...) asparagine) is linked at Asn-311. The cysteines at positions 322 and 357 are disulfide-linked.

Belongs to the peptidase A1 family. As to quaternary structure, monomer.

Its subcellular location is the secreted. It carries out the reaction Hydrolysis of proteins with broad specificity similar to that of pepsin A, preferring hydrophobic residues at P1 and P1', but also cleaving 20-Gly-|-Glu-21 in the B chain of insulin. Clots milk, and activates trypsinogen.. Secreted aspartic endopeptidase that allows assimilation of proteinaceous substrates. The scissile peptide bond is attacked by a nucleophilic water molecule activated by two aspartic residues in the active site. Shows a broad primary substrate specificity. Favors hydrophobic residues at the P1 and P1' positions, but can also activate trypsinogen and hydrolyze the B chain of insulin between positions 'Gly-20' and 'Glu-21'. The sequence is that of Penicillopepsin-1 from Penicillium roqueforti.